The sequence spans 549 residues: Lipase 4 (549 aa).

The signal sequence occupies residues 1 to 15; sequence MKLALVLSLIVSVAA. Cysteines 75 and 112 form a disulfide. Residue Ser-224 is the Acyl-ester intermediate of the active site. A disulfide bridge connects residues Cys-283 and Cys-292. The active-site Charge relay system is Glu-356. Asn-366 is a glycosylation site (N-linked (GlcNAc...) asparagine). The Charge relay system role is filled by His-464.

It belongs to the type-B carboxylesterase/lipase family.

The catalysed reaction is a triacylglycerol + H2O = a diacylglycerol + a fatty acid + H(+). This Diutina rugosa (Yeast) protein is Lipase 4 (LIP4).